We begin with the raw amino-acid sequence, 160 residues long: Phosphopantetheine adenylyltransferase (160 aa).

Residue Ser10 coordinates substrate. ATP is bound by residues 10 to 11 (SF) and His18. Substrate is bound by residues Lys42, Thr74, and Arg88. ATP contacts are provided by residues 89–91 (GLR), Glu99, and 124–130 (YSFISST).

Belongs to the bacterial CoaD family. As to quaternary structure, homohexamer. It depends on Mg(2+) as a cofactor.

It localises to the cytoplasm. It catalyses the reaction (R)-4'-phosphopantetheine + ATP + H(+) = 3'-dephospho-CoA + diphosphate. It functions in the pathway cofactor biosynthesis; coenzyme A biosynthesis; CoA from (R)-pantothenate: step 4/5. In terms of biological role, reversibly transfers an adenylyl group from ATP to 4'-phosphopantetheine, yielding dephospho-CoA (dPCoA) and pyrophosphate. The chain is Phosphopantetheine adenylyltransferase from Leptospira borgpetersenii serovar Hardjo-bovis (strain L550).